We begin with the raw amino-acid sequence, 876 residues long: Alanine--tRNA ligase (876 aa).

Zn(2+) is bound by residues histidine 568, histidine 572, cysteine 670, and histidine 674.

The protein belongs to the class-II aminoacyl-tRNA synthetase family. It depends on Zn(2+) as a cofactor.

It is found in the cytoplasm. The catalysed reaction is tRNA(Ala) + L-alanine + ATP = L-alanyl-tRNA(Ala) + AMP + diphosphate. Functionally, catalyzes the attachment of alanine to tRNA(Ala) in a two-step reaction: alanine is first activated by ATP to form Ala-AMP and then transferred to the acceptor end of tRNA(Ala). Also edits incorrectly charged Ser-tRNA(Ala) and Gly-tRNA(Ala) via its editing domain. In Geobacter metallireducens (strain ATCC 53774 / DSM 7210 / GS-15), this protein is Alanine--tRNA ligase.